Reading from the N-terminus, the 111-residue chain is uncharacterized protein (111 aa).

This sequence to M.tuberculosis Rv1271c.

This is an uncharacterized protein from Mycobacterium bovis (strain ATCC BAA-935 / AF2122/97).